Reading from the N-terminus, the 283-residue chain is ATP phosphoribosyltransferase (283 aa).

Belongs to the ATP phosphoribosyltransferase family. Long subfamily. Mg(2+) serves as cofactor.

Its subcellular location is the cytoplasm. It catalyses the reaction 1-(5-phospho-beta-D-ribosyl)-ATP + diphosphate = 5-phospho-alpha-D-ribose 1-diphosphate + ATP. It participates in amino-acid biosynthesis; L-histidine biosynthesis; L-histidine from 5-phospho-alpha-D-ribose 1-diphosphate: step 1/9. Feedback inhibited by histidine. In terms of biological role, catalyzes the condensation of ATP and 5-phosphoribose 1-diphosphate to form N'-(5'-phosphoribosyl)-ATP (PR-ATP). Has a crucial role in the pathway because the rate of histidine biosynthesis seems to be controlled primarily by regulation of HisG enzymatic activity. This is ATP phosphoribosyltransferase from Parabacteroides distasonis (strain ATCC 8503 / DSM 20701 / CIP 104284 / JCM 5825 / NCTC 11152).